The primary structure comprises 1128 residues: Translation initiation factor IF-2 (1128 aa).

The interval 57–519 (NSDKQILSIN…KETTRQRQKR (463 aa)) is disordered. Residues 70-83 (NKKDNYKQNKEDKS) are compositionally biased toward basic and acidic residues. Over residues 100-110 (KKQLLNKPLNK) the composition is skewed to low complexity. Residues 120-146 (QLKNPNKPNIYNSSQSQANLTNQNTKS) show a composition bias toward polar residues. Basic and acidic residues predominate over residues 147–158 (KPSEHFNKDKKT). Residues 182 to 196 (KNINNNLKSNESSKN) are compositionally biased toward low complexity. Basic and acidic residues predominate over residues 201–214 (GDKRELSLKPDQNR). Composition is skewed to polar residues over residues 243–267 (KQNN…NRPG) and 386–397 (AKTNNQKQNIES). Positions 432-445 (RKDWDDSAKLEALR) are enriched in basic and acidic residues. A compositionally biased stretch (basic residues) spans 499-519 (HKSTKQFKKKKKETTRQRQKR). The 173-residue stretch at 620-792 (KRPPVITVMG…ILLVSEVEDL (173 aa)) folds into the tr-type G domain. Positions 629–636 (GHVDHGKT) are G1. 629–636 (GHVDHGKT) provides a ligand contact to GTP. The tract at residues 654-658 (GITQH) is G2. Positions 679–682 (DTPG) are G3. Residues 679 to 683 (DTPGH) and 733 to 736 (NKID) contribute to the GTP site. Residues 733–736 (NKID) are G4. The tract at residues 769-771 (SAI) is G5.

The protein belongs to the TRAFAC class translation factor GTPase superfamily. Classic translation factor GTPase family. IF-2 subfamily.

The protein resides in the cytoplasm. One of the essential components for the initiation of protein synthesis. Protects formylmethionyl-tRNA from spontaneous hydrolysis and promotes its binding to the 30S ribosomal subunits. Also involved in the hydrolysis of GTP during the formation of the 70S ribosomal complex. This chain is Translation initiation factor IF-2, found in Prochlorococcus marinus (strain MIT 9312).